A 118-amino-acid chain; its full sequence is Hydrogenase maturation factor HypA (118 aa).

Histidine 2 contributes to the Ni(2+) binding site. Cysteine 73, cysteine 76, cysteine 93, and cysteine 96 together coordinate Zn(2+).

It belongs to the HypA/HybF family.

Functionally, involved in the maturation of [NiFe] hydrogenases. Required for nickel insertion into the metal center of the hydrogenase. The protein is Hydrogenase maturation factor HypA of Lawsonia intracellularis (strain PHE/MN1-00).